The following is an 892-amino-acid chain: LEAF RUST 10 DISEASE-RESISTANCE LOCUS RECEPTOR-LIKE PROTEIN KINASE-like 2.8 (892 aa).

A signal peptide spans 1–27 (MYYHSLSSYSILFFLFSLFHHLPCASS). Over 28–496 (NQGLGWCESL…RFIATLVRYT (469 aa)) the chain is Extracellular. Residues Asn-42, Asn-71, Asn-88, Asn-112, Asn-186, Asn-222, Asn-230, Asn-286, Asn-358, Asn-384, Asn-407, and Asn-458 are each glycosylated (N-linked (GlcNAc...) asparagine). A helical transmembrane segment spans residues 497–517 (FIALGALTGVVIVFLVLLCPC). The Cytoplasmic portion of the chain corresponds to 518-892 (FRVQIFRKRK…TNSKLESSSL (375 aa)). Thr-547 is subject to Phosphothreonine. In terms of domain architecture, Protein kinase spans 556–854 (KSFTEVVGRG…ALEVPPRPVL (299 aa)). Residues 562–570 (VGRGGFGIV) and Lys-584 each bind ATP. Tyr-629 carries the post-translational modification Phosphotyrosine. Asp-680 acts as the Proton acceptor in catalysis. 2 positions are modified to phosphothreonine: Thr-717 and Thr-720.

The protein belongs to the protein kinase superfamily. Ser/Thr protein kinase family.

Its subcellular location is the membrane. The catalysed reaction is L-seryl-[protein] + ATP = O-phospho-L-seryl-[protein] + ADP + H(+). The enzyme catalyses L-threonyl-[protein] + ATP = O-phospho-L-threonyl-[protein] + ADP + H(+). The polypeptide is LEAF RUST 10 DISEASE-RESISTANCE LOCUS RECEPTOR-LIKE PROTEIN KINASE-like 2.8 (Arabidopsis thaliana (Mouse-ear cress)).